The sequence spans 143 residues: 3-dehydroquinate dehydratase (143 aa).

Tyrosine 23 serves as the catalytic Proton acceptor. Substrate is bound by residues asparagine 74, histidine 80, and aspartate 87. Histidine 100 functions as the Proton donor in the catalytic mechanism. Substrate-binding positions include 101–102 (IS) and arginine 111.

Belongs to the type-II 3-dehydroquinase family. Homododecamer.

The catalysed reaction is 3-dehydroquinate = 3-dehydroshikimate + H2O. It participates in metabolic intermediate biosynthesis; chorismate biosynthesis; chorismate from D-erythrose 4-phosphate and phosphoenolpyruvate: step 3/7. Functionally, catalyzes a trans-dehydration via an enolate intermediate. In Endomicrobium trichonymphae, this protein is 3-dehydroquinate dehydratase.